A 208-amino-acid chain; its full sequence is LexA repressor (208 aa).

Residues 30–50 (VREICAAVKLSSTSTVHGHLA) constitute a DNA-binding region (H-T-H motif). Residues Ser-129 and Lys-167 each act as for autocatalytic cleavage activity in the active site.

Belongs to the peptidase S24 family. Homodimer.

The catalysed reaction is Hydrolysis of Ala-|-Gly bond in repressor LexA.. Represses a number of genes involved in the response to DNA damage (SOS response), including recA and lexA. In the presence of single-stranded DNA, RecA interacts with LexA causing an autocatalytic cleavage which disrupts the DNA-binding part of LexA, leading to derepression of the SOS regulon and eventually DNA repair. In Lactobacillus helveticus (strain DPC 4571), this protein is LexA repressor.